The following is a 393-amino-acid chain: Putative 8-amino-7-oxononanoate synthase (393 aa).

Arginine 23 is a substrate binding site. 110–111 (GY) serves as a coordination point for pyridoxal 5'-phosphate. Histidine 135 contributes to the substrate binding site. Pyridoxal 5'-phosphate contacts are provided by residues serine 183, 208–211 (DEAH), and 239–242 (TLSK). An N6-(pyridoxal phosphate)lysine modification is found at lysine 242. Residue threonine 362 participates in substrate binding.

Belongs to the class-II pyridoxal-phosphate-dependent aminotransferase family. BioF subfamily. As to quaternary structure, homodimer. It depends on pyridoxal 5'-phosphate as a cofactor.

The catalysed reaction is 6-carboxyhexanoyl-[ACP] + L-alanine + H(+) = (8S)-8-amino-7-oxononanoate + holo-[ACP] + CO2. It functions in the pathway cofactor biosynthesis; biotin biosynthesis. Its function is as follows. Catalyzes the decarboxylative condensation of pimeloyl-[acyl-carrier protein] and L-alanine to produce 8-amino-7-oxononanoate (AON), [acyl-carrier protein], and carbon dioxide. This Trichodesmium erythraeum (strain IMS101) protein is Putative 8-amino-7-oxononanoate synthase (bioF).